The chain runs to 255 residues: MSKAFLPTILEQKEKEVAQLVMEDLQPLRQTYRLYDFLKSNQNKLQIISEVKKASPSMGDINLDVDIVAQAKTYEENGAAMISVLTDEVFFKGDISYLKEISTQVAIPTLAKDFIIDEKQIVRSRNAGATVILLIVAALPEARLKELYDFATSLGLEVLVETHNLPELEVAHRIGAEIIGVNNRNLVTFETDINTSLELSTHFKDKPVYISESAIFTGQDAALVAPYFNGILVGTALMTADNVAKKVKELQIDKG.

This sequence belongs to the TrpC family.

The enzyme catalyses 1-(2-carboxyphenylamino)-1-deoxy-D-ribulose 5-phosphate + H(+) = (1S,2R)-1-C-(indol-3-yl)glycerol 3-phosphate + CO2 + H2O. It functions in the pathway amino-acid biosynthesis; L-tryptophan biosynthesis; L-tryptophan from chorismate: step 4/5. The sequence is that of Indole-3-glycerol phosphate synthase from Streptococcus thermophilus (strain ATCC BAA-491 / LMD-9).